A 436-amino-acid chain; its full sequence is Anaerobic glycerol-3-phosphate dehydrogenase subunit B (436 aa).

Belongs to the anaerobic G-3-P dehydrogenase subunit B family. In terms of assembly, composed of a catalytic GlpA/B dimer and of membrane bound GlpC. Requires FMN as cofactor.

It carries out the reaction a quinone + sn-glycerol 3-phosphate = dihydroxyacetone phosphate + a quinol. It participates in polyol metabolism; glycerol degradation via glycerol kinase pathway; glycerone phosphate from sn-glycerol 3-phosphate (anaerobic route): step 1/1. In terms of biological role, conversion of glycerol 3-phosphate to dihydroxyacetone. Uses fumarate or nitrate as electron acceptor. The sequence is that of Anaerobic glycerol-3-phosphate dehydrogenase subunit B from Vibrio cholerae serotype O1 (strain M66-2).